A 294-amino-acid chain; its full sequence is Putative pyruvate, phosphate dikinase regulatory protein (294 aa).

156–163 provides a ligand contact to ADP; sequence GVSRSGKT.

This sequence belongs to the pyruvate, phosphate/water dikinase regulatory protein family. PDRP subfamily.

The enzyme catalyses N(tele)-phospho-L-histidyl/L-threonyl-[pyruvate, phosphate dikinase] + ADP = N(tele)-phospho-L-histidyl/O-phospho-L-threonyl-[pyruvate, phosphate dikinase] + AMP + H(+). It carries out the reaction N(tele)-phospho-L-histidyl/O-phospho-L-threonyl-[pyruvate, phosphate dikinase] + phosphate + H(+) = N(tele)-phospho-L-histidyl/L-threonyl-[pyruvate, phosphate dikinase] + diphosphate. Bifunctional serine/threonine kinase and phosphorylase involved in the regulation of the pyruvate, phosphate dikinase (PPDK) by catalyzing its phosphorylation/dephosphorylation. The chain is Putative pyruvate, phosphate dikinase regulatory protein from Cutibacterium acnes (strain DSM 16379 / KPA171202) (Propionibacterium acnes).